The primary structure comprises 211 residues: MAKKKFSKDWIHQHINDPYVKMAQQKGYRARAAFKLIEILDTEKLMRRGDIVVDLGSAPGSWSQVARERLAGPGGVVDGRIIALDLLPMEPVAGVEFIQGDFRDEAVLQQLQEMVGGQPVSLVISDMAPNLSGVGVADSARIQHVCELALDFACNHLKPDGALIVKAFHGSGFSQIVQSFKQRFKRVVERKPKASRDKSSETFLVARDLKS.

Positions 60, 62, 85, 101, and 126 each coordinate S-adenosyl-L-methionine. Lys-166 acts as the Proton acceptor in catalysis.

Belongs to the class I-like SAM-binding methyltransferase superfamily. RNA methyltransferase RlmE family.

Its subcellular location is the cytoplasm. The enzyme catalyses uridine(2552) in 23S rRNA + S-adenosyl-L-methionine = 2'-O-methyluridine(2552) in 23S rRNA + S-adenosyl-L-homocysteine + H(+). Specifically methylates the uridine in position 2552 of 23S rRNA at the 2'-O position of the ribose in the fully assembled 50S ribosomal subunit. The chain is Ribosomal RNA large subunit methyltransferase E from Bordetella petrii (strain ATCC BAA-461 / DSM 12804 / CCUG 43448).